Reading from the N-terminus, the 370-residue chain is Protein PAM71, chloroplastic (370 aa).

Positions 1–38 (MLSLNLSESLRIPFQNPRPPKSDFSSTSSSPSSSSRRC) are disordered. A chloroplast-targeting transit peptide spans 1 to 73 (MLSLNLSESL…RNESQQLGFR (73 aa)). Residues 22-38 (SDFSSTSSSPSSSSRRC) are compositionally biased toward low complexity. The Stromal portion of the chain corresponds to 74-113 (CFQRNDAACYLEKAESEEHDRNLDVLVESSIAHSRREIQR). The helical transmembrane segment at 114–134 (VLMFLAVSGSVALLGTDPAFA) threads the bilayer. Residues 135–161 (ASSIPNVTQSLVTSFGDLGDISSGFAS) are Lumenal, thylakoid-facing. A helical transmembrane segment spans residues 162–182 (AFLLIFFSELGDKTFFIAALL). At 183–188 (AARNSA) the chain is on the stromal side. Residues 189–209 (ATVFVGTFGALGIMTIISVVL) form a helical membrane-spanning segment. At 210 to 228 (GRTFHYVDEVLPFRFGGTD) the chain is on the lumenal, thylakoid side. Residues 229–249 (LPIDDIAAVCLLVYFGVSTLL) traverse the membrane as a helical segment. At 250–275 (DAVSDEGKADEEQKEAELAVSELSGN) the chain is on the stromal side. Residues 276 to 296 (GAGIVAAANTIISTFALVFVA) traverse the membrane as a helical segment. At 297 to 315 (EWGDKSFFSTIALAAASSP) the chain is on the lumenal, thylakoid side. The chain crosses the membrane as a helical span at residues 316-336 (LGVIAGALAGHGAATLLAVLG). Topologically, residues 337–348 (GSLLGNFLSEKA) are stromal. The helical transmembrane segment at 349–369 (IAYVGGVLFLVFAAVTVAEIV) threads the bilayer. Position 370 (T370) is a topological domain, lumenal, thylakoid.

Belongs to the GDT1 family. Homodimer.

The protein localises to the plastid. The protein resides in the chloroplast membrane. Its subcellular location is the thylakoid. Its function is as follows. Mn(2+)/H(+) exchanger, which transport Mn(2+)from the chloroplast stroma into the acidic thylakoid lumen. Might be a chloroplast-localized Ca(2+)/H(+) antiporter. Regulates Ca(2+), Mn(2+) and pH homeostasis. Required for chloroplast development. The polypeptide is Protein PAM71, chloroplastic (Arabidopsis thaliana (Mouse-ear cress)).